Reading from the N-terminus, the 110-residue chain is uncharacterized protein (110 aa).

A coiled-coil region spans residues 16–46 (ELDKLRECEERLSVIEKQKQSSKQESEETYI). The segment covering 85 to 96 (EEKDKKCQRKPE) has biased composition (basic and acidic residues). The segment at 85–110 (EEKDKKCQRKPEAPSTPAVTIRSKRQ) is disordered.

This is an uncharacterized protein from Bacillus subtilis (strain 168).